A 329-amino-acid chain; its full sequence is L-arabinose-binding periplasmic protein (329 aa).

A signal peptide spans 1–23 (MHKFTKALAAIGLAAVMSQSAMA).

Belongs to the bacterial solute-binding protein 2 family.

The protein resides in the periplasm. In terms of biological role, involved in the high-affinity L-arabinose membrane transport system. Binds with high affinity to arabinose, but can also bind D-galactose (approximately 2-fold reduction) and D-fucose (approximately 40-fold reduction). The chain is L-arabinose-binding periplasmic protein (araF) from Escherichia coli (strain K12).